We begin with the raw amino-acid sequence, 451 residues long: Exodeoxyribonuclease 7 large subunit (451 aa).

The protein belongs to the XseA family. In terms of assembly, heterooligomer composed of large and small subunits.

The protein resides in the cytoplasm. It carries out the reaction Exonucleolytic cleavage in either 5'- to 3'- or 3'- to 5'-direction to yield nucleoside 5'-phosphates.. Bidirectionally degrades single-stranded DNA into large acid-insoluble oligonucleotides, which are then degraded further into small acid-soluble oligonucleotides. The polypeptide is Exodeoxyribonuclease 7 large subunit (Neisseria meningitidis serogroup A / serotype 4A (strain DSM 15465 / Z2491)).